The primary structure comprises 97 residues: ORF9b protein (97 aa).

Positions 8–97 constitute a 9b domain; that stretch reads MHPALRLVDP…PDEFVVVTVK (90 aa). The short motif at 45 to 53 is the Nuclear export signal element; it reads ILRLGSPLS.

The protein belongs to the coronavirus group 2 protein 9b family. In terms of assembly, homodimer. Interacts with host TOMM70; the interaction occurs only with monomer.

It is found in the host cytoplasm. The protein resides in the host mitochondrion. Functionally, plays a role in inhibiting the host innate immune response by targeting the mitochondrial-associated innate immune response. Acts by binding to host TOMM70, inhibiting its binding to HSP90AB1 thereby disrupting the interferon activation pathway. This is ORF9b protein from Homo sapiens (Human).